A 316-amino-acid chain; its full sequence is tRNA dimethylallyltransferase (316 aa).

Residue 12–19 (GPTASGKT) participates in ATP binding. 14-19 (TASGKT) lines the substrate pocket. Interaction with substrate tRNA regions lie at residues 37–40 (DSAL) and 161–165 (QRILR).

The protein belongs to the IPP transferase family. As to quaternary structure, monomer. It depends on Mg(2+) as a cofactor.

It catalyses the reaction adenosine(37) in tRNA + dimethylallyl diphosphate = N(6)-dimethylallyladenosine(37) in tRNA + diphosphate. In terms of biological role, catalyzes the transfer of a dimethylallyl group onto the adenine at position 37 in tRNAs that read codons beginning with uridine, leading to the formation of N6-(dimethylallyl)adenosine (i(6)A). The protein is tRNA dimethylallyltransferase of Idiomarina loihiensis (strain ATCC BAA-735 / DSM 15497 / L2-TR).